We begin with the raw amino-acid sequence, 164 residues long: Transcription elongation factor GreA (164 aa).

Belongs to the GreA/GreB family.

In terms of biological role, necessary for efficient RNA polymerase transcription elongation past template-encoded arresting sites. The arresting sites in DNA have the property of trapping a certain fraction of elongating RNA polymerases that pass through, resulting in locked ternary complexes. Cleavage of the nascent transcript by cleavage factors such as GreA or GreB allows the resumption of elongation from the new 3'terminus. GreA releases sequences of 2 to 3 nucleotides. In Helicobacter pylori (strain P12), this protein is Transcription elongation factor GreA.